The chain runs to 174 residues: Chorismate pyruvate-lyase (174 aa).

Residues M36, R78, L116, and E157 each coordinate substrate.

The protein belongs to the UbiC family. As to quaternary structure, monomer.

The protein localises to the cytoplasm. The catalysed reaction is chorismate = 4-hydroxybenzoate + pyruvate. Its pathway is cofactor biosynthesis; ubiquinone biosynthesis. Functionally, removes the pyruvyl group from chorismate, with concomitant aromatization of the ring, to provide 4-hydroxybenzoate (4HB) for the ubiquinone pathway. The chain is Chorismate pyruvate-lyase from Erwinia tasmaniensis (strain DSM 17950 / CFBP 7177 / CIP 109463 / NCPPB 4357 / Et1/99).